Here is a 281-residue protein sequence, read N- to C-terminus: uncharacterized protein (281 aa).

The protein resides in the plastid. Its subcellular location is the chloroplast. This is an uncharacterized protein from Euglena gracilis.